Consider the following 374-residue polypeptide: All-trans-retinol dehydrogenase [NAD(+)] ADH7 (374 aa).

The residue at position 1 (methionine 1) is an N-acetylmethionine. Residues cysteine 47, histidine 68, cysteine 98, cysteine 101, cysteine 104, cysteine 112, and cysteine 174 each coordinate Zn(2+). Residues 199–204, aspartate 223, lysine 228, 292–294, and arginine 369 each bind NAD(+); these read GLGGVG and VGA.

It belongs to the zinc-containing alcohol dehydrogenase family. Class-IV subfamily. As to quaternary structure, homodimer. The cofactor is Zn(2+). As to expression, preferentially expressed in stomach.

The protein resides in the cytoplasm. The catalysed reaction is a primary alcohol + NAD(+) = an aldehyde + NADH + H(+). The enzyme catalyses 10-hydroxydecanoate + NAD(+) = 10-oxodecanoate + NADH + H(+). It carries out the reaction all-trans-retinol + NAD(+) = all-trans-retinal + NADH + H(+). It catalyses the reaction 9-cis-retinol + NAD(+) = 9-cis-retinal + NADH + H(+). The catalysed reaction is all-trans-3,4-didehydroretinol + NAD(+) = all-trans-3,4-didehydroretinal + NADH + H(+). The enzyme catalyses all-trans-4-hydroxyretinol + NAD(+) = all-trans-4-hydroxyretinal + NADH + H(+). It carries out the reaction all-trans-4-oxoretinol + NAD(+) = all-trans-4-oxoretinal + NADH + H(+). It catalyses the reaction 12-hydroxydodecanoate + NAD(+) = 12-oxododecanoate + NADH + H(+). The catalysed reaction is 16-hydroxyhexadecanoate + NAD(+) = 16-oxohexadecanoate + NADH + H(+). The enzyme catalyses hexan-1-ol + NAD(+) = hexanal + NADH + H(+). It carries out the reaction (E)-hex-2-en-1-ol + NAD(+) = (E)-hex-2-enal + NADH + H(+). It catalyses the reaction (E)-4-hydroxynon-2-en-1-ol + NAD(+) = (E)-4-hydroxynon-2-enal + NADH + H(+). Retinol oxidation is inhibited by the detergent Tween 80. Ethanol inhibits both all-trans-retinol and 9-cis-retinol oxidation. 13-cis-retinol is an effective competitive inhibitor of the 9-cis-retinol oxidation. All-trans-retinoic acid is a powerful inhibitor of all-trans-retinol oxidation. 13-cis-retinoic acid is a powerful inhibitor of all-trans-retinol oxidation. Cimetidine and ranitidine inhibited ethanol oxidation. In terms of biological role, catalyzes the NAD-dependent oxidation of all-trans-retinol, alcohol, aldehyde and omega-hydroxy fatty acids and their derivatives. Oxidizes preferentially all trans-retinol, all-trans-4-hydroxyretinol, 9-cis-retinol, 2-hexenol, and long chain omega-hydroxy fatty acids such as juniperic acid. In vitro can also catalyze the NADH-dependent reduction of all-trans-retinal and aldehydes and their derivatives. Reduces preferentially all trans-retinal, all-trans-4-oxoretinal and hexanal. Catalyzes in the oxidative direction with higher efficiency. Therefore may participate in retinoid metabolism, fatty acid omega-oxidation, and elimination of cytotoxic aldehydes produced by lipid peroxidation. The protein is All-trans-retinol dehydrogenase [NAD(+)] ADH7 (Adh7) of Rattus norvegicus (Rat).